A 330-amino-acid chain; its full sequence is GTPase Obg (330 aa).

An Obg domain is found at M1–L159. One can recognise an OBG-type G domain in the interval S160–K327. GTP contacts are provided by residues G166 to S173, F191 to V195, D212 to G215, N279 to D282, and S308 to Y310. Mg(2+) contacts are provided by S173 and T193.

It belongs to the TRAFAC class OBG-HflX-like GTPase superfamily. OBG GTPase family. In terms of assembly, monomer. Mg(2+) is required as a cofactor.

The protein localises to the cytoplasm. An essential GTPase which binds GTP, GDP and possibly (p)ppGpp with moderate affinity, with high nucleotide exchange rates and a fairly low GTP hydrolysis rate. Plays a role in control of the cell cycle, stress response, ribosome biogenesis and in those bacteria that undergo differentiation, in morphogenesis control. This chain is GTPase Obg, found in Rickettsia massiliae (strain Mtu5).